Here is a 268-residue protein sequence, read N- to C-terminus: Bis(5'-nucleosyl)-tetraphosphatase, symmetrical (268 aa).

Belongs to the Ap4A hydrolase family.

The catalysed reaction is P(1),P(4)-bis(5'-adenosyl) tetraphosphate + H2O = 2 ADP + 2 H(+). In terms of biological role, hydrolyzes diadenosine 5',5'''-P1,P4-tetraphosphate to yield ADP. This chain is Bis(5'-nucleosyl)-tetraphosphatase, symmetrical, found in Vibrio parahaemolyticus serotype O3:K6 (strain RIMD 2210633).